The chain runs to 610 residues: UvrABC system protein C (610 aa).

Residues 16–94 (SQPGVYRMYD…IKLYQPRYNV (79 aa)) enclose the GIY-YIG domain. The UVR domain maps to 204-239 (DQVLTQLISRMETASQNLEFEEAARIRDQIQAVRRV).

The protein belongs to the UvrC family. As to quaternary structure, interacts with UvrB in an incision complex.

The protein resides in the cytoplasm. In terms of biological role, the UvrABC repair system catalyzes the recognition and processing of DNA lesions. UvrC both incises the 5' and 3' sides of the lesion. The N-terminal half is responsible for the 3' incision and the C-terminal half is responsible for the 5' incision. This Shigella boydii serotype 18 (strain CDC 3083-94 / BS512) protein is UvrABC system protein C.